A 344-amino-acid chain; its full sequence is Eukaryotic translation initiation factor 2 subunit alpha homolog (344 aa).

The S1 motif domain occupies 21–92 (DMAVMIQVKN…EKGYIDLSKR (72 aa)). Ser56 bears the Phosphoserine; by GCN2 mark. The tract at residues 312–344 (DNEEMSGDEDSGDEEEDTGMGEVDLDAGAGIIE) is disordered. Positions 314–336 (EEMSGDEDSGDEEEDTGMGEVDL) are enriched in acidic residues.

It belongs to the eIF-2-alpha family. Heterotrimer composed of an alpha, a beta and a gamma chain. Post-translationally, phosphorylated at Ser-56 by GCN2.

Functions in the early steps of protein synthesis by forming a ternary complex with GTP and initiator tRNA. This complex binds to a 40S ribosomal subunit, followed by mRNA binding to form a 43S pre-initiation complex. Junction of the 60S ribosomal subunit to form the 80S initiation complex is preceded by hydrolysis of the GTP bound to eIF-2 and release of an eIF-2-GDP binary complex. In order for eIF-2 to recycle and catalyze another round of initiation, the GDP bound to eIF-2 must exchange with GTP by way of a reaction catalyzed by eIF-2B. In Arabidopsis thaliana (Mouse-ear cress), this protein is Eukaryotic translation initiation factor 2 subunit alpha homolog.